A 1002-amino-acid polypeptide reads, in one-letter code: MARAPRWMLGWLLLACCVPHTEPLAVMSVDMGSESMKIAIVKPGVPMEIVLNKESRRKTPVAVALKENERLFGDSALGMSIKTPKVAFRYFQDLLGKQIDNPQVALYQSRFPEHELVKDEKRQTVIFKLSQTLQYSPEEMLGMVLNYSRGLAEEFAEQPIKDAVITVPAYFNQAERRAVLHAARMADLKVLQLINDNTAVALNYGVSGGKTSMPLHSFSFQNIMFYDMGAGSTVCTIVTYQTVKTKDSGTQPQLQIQGIGFDRTLGGLEMELRLRDYLAKLFNDQHPSKDVRKNPRAMAKLLKEANRLKTVLSANADHMAQIEGLLDDIDFKAKVSRQEFEDLCSDLFQRVPGPVQQALSSAEMNLDGIDQVILVGGATRVPKVQEVLLKAVGKEELGKNINADEAAAMGAVYQAAALSKAFKVKPFMVRDAAMFPIQVEFTREVEEDDKSKSLKHNKRILFQRMAPYPQRKVITFNRYTDDFEFYVNYGDLSFLNQDDLRIFGSLNLTTVRLKGVGESFKKHSDYESKGIKAHFNMDESGVLSLDRVESVFETLVEDKLEEESTLTKLGNTISSLFGGGGHTPEAGENLTDSVQEEEESLAEAAKEEQGVKQGQKSSAEDAGEEQGEEKQQSPHPDQAEAVPPKEESQKNEEGEKSEARDPKEDKETVNEEELSKSSGAGTAAKAEEEKKIKAPKKQKLVHEITMELDVNDVPDLLEDELKSSMKKLQDLTIRDLEKQEREKSANSLESFIFETQDKLYQEEYLFVSTEEEREEISKKLSEASNWMEEEGYAAATKELKDKLAELKKLCRNLFFRVEERRKWPERLAALESLLNHSNIFLKGARMIPESDQIFTEVELGTLEKAINETTVWKNETLAEQNKLSPAEKPVLLSKDIELKIAGLDREVQYLLDKAKFAKPKPKKEKNATKSDSGKNATGTSESENTIPPTEGKQEEKPEDISPAKEPPTTEKVVTDDEPGSDSSSKKEKKPEAGGESRKNDEL.

The signal sequence occupies residues 1–23; the sequence is MARAPRWMLGWLLLACCVPHTEP. Disordered regions lie at residues 576 to 698 and 918 to 1002; these read LFGG…PKKQ and KPKP…NDEL. Residues 643–675 are compositionally biased toward basic and acidic residues; it reads PPKEESQKNEEGEKSEARDPKEDKETVNEEELS. Polar residues predominate over residues 933-947; that stretch reads GKNATGTSESENTIP. Basic and acidic residues-rich tracts occupy residues 951–962 and 983–1002; these read GKQEEKPEDISP and SSKKEKKPEAGGESRKNDEL. A Prevents secretion from ER motif is present at residues 999–1002; sequence NDEL.

This sequence belongs to the heat shock protein 70 family.

It localises to the endoplasmic reticulum lumen. Functionally, has a pivotal role in cytoprotective cellular mechanisms triggered by oxygen deprivation. Promotes HSPA5/BiP-mediated ATP nucleotide exchange and thereby activates the unfolded protein response (UPR) pathway in the presence of endoplasmic reticulum stress. May play a role as a molecular chaperone and participate in protein folding. This Gallus gallus (Chicken) protein is Hypoxia up-regulated protein 1 (HYOU1).